A 171-amino-acid chain; its full sequence is Cyclin-dependent kinase inhibitor 2A (171 aa).

Over residues 33-42 the composition is skewed to basic and acidic residues; that stretch reads ASMHTKHESE. The disordered stretch occupies residues 33 to 52; it reads ASMHTKHESEESFSGEKLTE. ANK repeat units lie at residues 45 to 74, 78 to 106, and 111 to 140; these read FSGE…NPNA, FGRS…EPNT, and TLTL…RLDV.

Belongs to the CDKN2 cyclin-dependent kinase inhibitor family. As to quaternary structure, heterodimer with CDK4 or CDK6. Predominamt P16 complexes contained CDK6. Interacts with CDK4 (both 'T-172'-phosphorylated and non-phosphorylated forms); the interaction inhibits cyclin D-CDK4 kinase activity. Interacts with ISCO2. As to expression, expressed predominantly in lung and testis. In the testis, restricted to germ cells in the seminiferous epithelium. Not detected in premeiotic spermatogonia but high levels found in postmeiotic spermatids. In primary tumors, low levels detected in melanocytic hyperplasias. Higher levels found in non-metastatic and metastatic melanomas.

It is found in the cytoplasm. The protein localises to the nucleus. Acts as a negative regulator of the proliferation of normal cells by interacting strongly with CDK4 and CDK6. This inhibits their ability to interact with cyclins D and to phosphorylate the retinoblastoma protein. The protein is Cyclin-dependent kinase inhibitor 2A of Monodelphis domestica (Gray short-tailed opossum).